Reading from the N-terminus, the 101-residue chain is Small ribosomal subunit protein uS14 (101 aa).

It belongs to the universal ribosomal protein uS14 family. In terms of assembly, part of the 30S ribosomal subunit. Contacts proteins S3 and S10.

Functionally, binds 16S rRNA, required for the assembly of 30S particles and may also be responsible for determining the conformation of the 16S rRNA at the A site. This chain is Small ribosomal subunit protein uS14, found in Novosphingobium aromaticivorans (strain ATCC 700278 / DSM 12444 / CCUG 56034 / CIP 105152 / NBRC 16084 / F199).